The sequence spans 141 residues: Large ribosomal subunit protein uL16 (141 aa).

It belongs to the universal ribosomal protein uL16 family. Part of the 50S ribosomal subunit.

Its function is as follows. Binds 23S rRNA and is also seen to make contacts with the A and possibly P site tRNAs. In Rhodospirillum centenum (strain ATCC 51521 / SW), this protein is Large ribosomal subunit protein uL16.